A 316-amino-acid polypeptide reads, in one-letter code: DNA-directed RNA polymerase III subunit RPC6 (316 aa).

Position 2 is an N-acetylalanine (alanine 2). Residues lysine 5 and lysine 7 each participate in a glycyl lysine isopeptide (Lys-Gly) (interchain with G-Cter in SUMO2) cross-link. [4Fe-4S] cluster contacts are provided by cysteine 287, cysteine 290, cysteine 296, and cysteine 307.

This sequence belongs to the eukaryotic RPC34/RPC39 RNA polymerase subunit family. Component of the RNA polymerase III complex consisting of 17 subunits: a ten-subunit horseshoe-shaped catalytic core composed of POLR3A/RPC1, POLR3B/RPC2, POLR1C/RPAC1, POLR1D/RPAC2, POLR3K/RPC10, POLR2E/RPABC1, POLR2F/RPABC2, POLR2H/RPABC3, POLR2K/RPABC4 and POLR2L/RPABC5; a mobile stalk composed of two subunits POLR3H/RPC8 and CRCP/RPC9, protruding from the core and functioning primarily in transcription initiation; and additional subunits homologous to general transcription factors of the RNA polymerase II machinery, POLR3C/RPC3-POLR3F/RPC6-POLR3G/RPC7 heterotrimer required for transcription initiation and POLR3D/RPC4-POLR3E/RPC5 heterodimer involved in both transcription initiation and termination. Directly interacts with POLR3C. Interacts with TBP and TFIIIB90 and GTF3C4. Interacts with MAF1. As part of the RNA polymerase III complex, interacts with PKP2.

The protein localises to the nucleus. DNA-dependent RNA polymerase catalyzes the transcription of DNA into RNA using the four ribonucleoside triphosphates as substrates. Specific peripheric component of RNA polymerase III (Pol III) which synthesizes small non-coding RNAs including 5S rRNA, snRNAs, tRNAs and miRNAs from at least 500 distinct genomic loci. Part of POLR3C/RPC3-POLR3F/RPC6-POLR3G/RPC7 heterotrimer that coordinates the dynamics of Pol III stalk and clamp modules during the transition from apo to elongation state. Pol III plays a key role in sensing and limiting infection by intracellular bacteria and DNA viruses, including varicella zoster virus. Acts as a nuclear and cytosolic DNA sensor detecting AT-rich DNA, involved in innate immune response. Can sense non-self dsDNA that serves as template for transcription into dsRNA. The non-self RNA polymerase III transcripts, such as Epstein-Barr virus-encoded RNAs (EBERs) induce type I interferon and NF-kappa-B through the RIG-I pathway. Preferentially binds double-stranded DNA (dsDNA). The sequence is that of DNA-directed RNA polymerase III subunit RPC6 from Homo sapiens (Human).